Reading from the N-terminus, the 1207-residue chain is DNA-directed RNA polymerase subunit beta' (1207 aa).

Residues Cys60, Cys62, Cys75, and Cys78 each contribute to the Zn(2+) site. The Mg(2+) site is built by Asp450, Asp452, and Asp454. Zn(2+) contacts are provided by Cys819, Cys893, Cys900, and Cys903.

Belongs to the RNA polymerase beta' chain family. In terms of assembly, the RNAP catalytic core consists of 2 alpha, 1 beta, 1 beta' and 1 omega subunit. When a sigma factor is associated with the core the holoenzyme is formed, which can initiate transcription. The cofactor is Mg(2+). Zn(2+) serves as cofactor.

It catalyses the reaction RNA(n) + a ribonucleoside 5'-triphosphate = RNA(n+1) + diphosphate. DNA-dependent RNA polymerase catalyzes the transcription of DNA into RNA using the four ribonucleoside triphosphates as substrates. This is DNA-directed RNA polymerase subunit beta' from Streptococcus pyogenes serotype M3 (strain ATCC BAA-595 / MGAS315).